We begin with the raw amino-acid sequence, 510 residues long: Aromatic-L-amino-acid decarboxylase (510 aa).

Residues 1–17 are compositionally biased toward polar residues; sequence MSHIPISNTIPPKQTDG. Residues 1–29 are disordered; that stretch reads MSHIPISNTIPPKQTDGNGKANISPDKLD. Thr117 contributes to the substrate binding site. Pyridoxal 5'-phosphate-binding residues include Ala183, Ser184, His227, Asp305, and Asn334. His227 contributes to the substrate binding site. N6-(pyridoxal phosphate)lysine is present on Lys337. Residues 358–384 are disordered; the sequence is NAFNVDPLYLKHDMQGSAPDYRHWQIP.

This sequence belongs to the group II decarboxylase family. In terms of assembly, homodimer. Pyridoxal 5'-phosphate is required as a cofactor.

The enzyme catalyses L-dopa + H(+) = dopamine + CO2. It carries out the reaction 5-hydroxy-L-tryptophan + H(+) = serotonin + CO2. Its function is as follows. Catalyzes the decarboxylation of L-3,4-dihydroxyphenylalanine (L-DOPA) to dopamine and L-5-hydroxytryptophan (5-HTP) to serotonin. Catalyzes the formation of serotonin more efficiently than dopamine. Displays no activity to tyrosine. Variation in the synthesis of bioamines may be a factor contributing to natural variation in life span. This chain is Aromatic-L-amino-acid decarboxylase (Ddc), found in Drosophila simulans (Fruit fly).